We begin with the raw amino-acid sequence, 378 residues long: Protein KlaB (378 aa).

Belongs to the TelA family.

In terms of biological role, belongs to the kla operon, which is associated with cryptic tellurite resistance, and IncW plasmid fertility inhibition. This chain is Protein KlaB (klaB), found in Escherichia coli.